We begin with the raw amino-acid sequence, 397 residues long: Elongation factor Tu (397 aa).

The 198-residue stretch at 10–207 (KPHVNIGTIG…VLDEYVKEPV (198 aa)) folds into the tr-type G domain. Residues 19-26 (GHIDHGKT) are G1. 19 to 26 (GHIDHGKT) contributes to the GTP binding site. T26 is a Mg(2+) binding site. A G2 region spans residues 60 to 64 (GITIS). Positions 81 to 84 (DCPG) are G3. GTP is bound by residues 81-85 (DCPGH) and 136-139 (NKCD). The interval 136 to 139 (NKCD) is G4. The tract at residues 174 to 176 (SAL) is G5.

The protein belongs to the TRAFAC class translation factor GTPase superfamily. Classic translation factor GTPase family. EF-Tu/EF-1A subfamily. In terms of assembly, monomer.

It is found in the cytoplasm. The enzyme catalyses GTP + H2O = GDP + phosphate + H(+). Functionally, GTP hydrolase that promotes the GTP-dependent binding of aminoacyl-tRNA to the A-site of ribosomes during protein biosynthesis. This is Elongation factor Tu from Desulforapulum autotrophicum (strain ATCC 43914 / DSM 3382 / VKM B-1955 / HRM2) (Desulfobacterium autotrophicum).